Consider the following 247-residue polypeptide: 7-cyano-7-deazaguanine synthase (247 aa).

21 to 31 (FSGGQDSTACL) provides a ligand contact to ATP. Zn(2+) is bound by residues C209, C224, C227, and C230.

The protein belongs to the QueC family. Requires Zn(2+) as cofactor.

It carries out the reaction 7-carboxy-7-deazaguanine + NH4(+) + ATP = 7-cyano-7-deazaguanine + ADP + phosphate + H2O + H(+). Its pathway is purine metabolism; 7-cyano-7-deazaguanine biosynthesis. Functionally, catalyzes the ATP-dependent conversion of 7-carboxy-7-deazaguanine (CDG) to 7-cyano-7-deazaguanine (preQ(0)). The sequence is that of 7-cyano-7-deazaguanine synthase from Halorhodospira halophila (strain DSM 244 / SL1) (Ectothiorhodospira halophila (strain DSM 244 / SL1)).